Reading from the N-terminus, the 383-residue chain is 8-amino-7-oxononanoate synthase (383 aa).

A substrate-binding site is contributed by arginine 22. 109-110 lines the pyridoxal 5'-phosphate pocket; that stretch reads GF. Histidine 134 provides a ligand contact to substrate. Pyridoxal 5'-phosphate is bound by residues serine 178, histidine 206, and threonine 232. Lysine 235 bears the N6-(pyridoxal phosphate)lysine mark. Threonine 348 is a binding site for substrate.

This sequence belongs to the class-II pyridoxal-phosphate-dependent aminotransferase family. BioF subfamily. In terms of assembly, homodimer. It depends on pyridoxal 5'-phosphate as a cofactor.

It carries out the reaction 6-carboxyhexanoyl-[ACP] + L-alanine + H(+) = (8S)-8-amino-7-oxononanoate + holo-[ACP] + CO2. Its pathway is cofactor biosynthesis; biotin biosynthesis. In terms of biological role, catalyzes the decarboxylative condensation of pimeloyl-[acyl-carrier protein] and L-alanine to produce 8-amino-7-oxononanoate (AON), [acyl-carrier protein], and carbon dioxide. This Vibrio parahaemolyticus serotype O3:K6 (strain RIMD 2210633) protein is 8-amino-7-oxononanoate synthase.